Consider the following 160-residue polypeptide: Phosphopantetheine adenylyltransferase (160 aa).

Substrate is bound at residue threonine 10. ATP contacts are provided by residues 10 to 11 and histidine 18; that span reads TF. Lysine 42, leucine 74, and arginine 88 together coordinate substrate. ATP contacts are provided by residues 89 to 91, glutamate 99, and 124 to 130; these read GLR and HGFLSST.

The protein belongs to the bacterial CoaD family. In terms of assembly, homohexamer. The cofactor is Mg(2+).

The protein localises to the cytoplasm. The enzyme catalyses (R)-4'-phosphopantetheine + ATP + H(+) = 3'-dephospho-CoA + diphosphate. It participates in cofactor biosynthesis; coenzyme A biosynthesis; CoA from (R)-pantothenate: step 4/5. Reversibly transfers an adenylyl group from ATP to 4'-phosphopantetheine, yielding dephospho-CoA (dPCoA) and pyrophosphate. This Aliivibrio fischeri (strain MJ11) (Vibrio fischeri) protein is Phosphopantetheine adenylyltransferase.